Consider the following 394-residue polypeptide: Carbamoyl phosphate synthase small chain (394 aa).

Residues methionine 1–arginine 188 form a CPSase region. Serine 49, glycine 240, and glycine 242 together coordinate L-glutamine. Positions arginine 192–alanine 379 constitute a Glutamine amidotransferase type-1 domain. Residue cysteine 267 is the Nucleophile of the active site. Residues leucine 268, glutamine 271, asparagine 309, glycine 311, and tyrosine 312 each contribute to the L-glutamine site. Residues histidine 352 and glutamate 354 contribute to the active site.

This sequence belongs to the CarA family. In terms of assembly, composed of two chains; the small (or glutamine) chain promotes the hydrolysis of glutamine to ammonia, which is used by the large (or ammonia) chain to synthesize carbamoyl phosphate. Tetramer of heterodimers (alpha,beta)4.

The enzyme catalyses hydrogencarbonate + L-glutamine + 2 ATP + H2O = carbamoyl phosphate + L-glutamate + 2 ADP + phosphate + 2 H(+). It catalyses the reaction L-glutamine + H2O = L-glutamate + NH4(+). Its pathway is amino-acid biosynthesis; L-arginine biosynthesis; carbamoyl phosphate from bicarbonate: step 1/1. It functions in the pathway pyrimidine metabolism; UMP biosynthesis via de novo pathway; (S)-dihydroorotate from bicarbonate: step 1/3. Small subunit of the glutamine-dependent carbamoyl phosphate synthetase (CPSase). CPSase catalyzes the formation of carbamoyl phosphate from the ammonia moiety of glutamine, carbonate, and phosphate donated by ATP, constituting the first step of 2 biosynthetic pathways, one leading to arginine and/or urea and the other to pyrimidine nucleotides. The small subunit (glutamine amidotransferase) binds and cleaves glutamine to supply the large subunit with the substrate ammonia. The protein is Carbamoyl phosphate synthase small chain of Deinococcus geothermalis (strain DSM 11300 / CIP 105573 / AG-3a).